The primary structure comprises 304 residues: C-type lectin domain-containing protein 141 (304 aa).

Positions 1–19 (MRSSSTLLIAFGLFLASMS) are cleaved as a signal peptide. The disordered stretch occupies residues 29 to 100 (GSGGHRPPSS…TTPEPTTTKV (72 aa)). The span at 51–99 (TKPPKSTSTPSTSTSTPTTTTTTTTTTTTTPTTTTTTTTTTTPEPTTTK) shows a compositional bias: low complexity.

This chain is C-type lectin domain-containing protein 141 (clec-141), found in Caenorhabditis elegans.